The sequence spans 466 residues: Probable periplasmic serine protease do/HhoA-like (466 aa).

The N-terminal stretch at 1 to 29 (MKKTRFVLNSIALGLSVLSTSFVAHVAQA) is a signal peptide. Active-site charge relay system residues include His120, Asp150, and Ser226. PDZ domains are found at residues 270–361 (ILEF…LRDG) and 367–458 (KMKL…LRGD).

The protein belongs to the peptidase S1C family.

It localises to the periplasm. The sequence is that of Probable periplasmic serine protease do/HhoA-like from Haemophilus influenzae (strain ATCC 51907 / DSM 11121 / KW20 / Rd).